A 464-amino-acid polypeptide reads, in one-letter code: MKTVSEQMELARKAQAIVNDYTQEQIDEICLAIGWEVYEDENIAKLAKMAVEETGYGNVQSKIIKHKRKVGGVLHDIKGAKSVGLIERNEETGISKYAKPVGVVCAILPATNPTATCGGKAVGILKGRNAVIFKPSSRALKSTTEAINMMRAGLRKVGAPEDLIQVLEDPSREAITELMKVSDLIVATGSGQVVRAAYSSGTPAYGVGQGNACAIVAEDADVAEAAKMICGSKLFDYATSCSSENAVIPVEAVYDQFMAEMKKNGCYLVTGEDREKLKNHMWKPNAKGKIALNPDIIAKSAQVIADGAGISIPEGTDILLVEGMEPILGDKFHDEKISPVLTVYKAKDFKDAYRILVELTNLVGRGHSCGIHTYKHEYIEFLGEHMKSSRITVRQSMSAGNGGHPFNRMPSTATLGCGTWGGNSTTENVHWRHFINVTWVNEPVAPWTFTDEDMWGDFWKKYGK.

The Nucleophile role is filled by cysteine 241.

The protein belongs to the aldehyde dehydrogenase family.

It carries out the reaction sulfoacetaldehyde + NADP(+) + CoA = sulfoacetyl-CoA + NADPH + H(+). In terms of biological role, involved in the degradation of sulfoacetate. Catalyzes the conversion of sulfoacetyl-CoA and NADPH to sulfoacetaldehyde, CoA and NADP(+). A much lower level of activity (1%) is observed when NADP(+) is replaced with NAD(+). The protein is Sulfoacetaldehyde dehydrogenase (acylating) of Bilophila wadsworthia (strain 3_1_6).